The following is a 528-amino-acid chain: ATP synthase subunit alpha (528 aa).

Position 169-176 (169-176 (GDRQTGKT)) interacts with ATP.

Belongs to the ATPase alpha/beta chains family. In terms of assembly, F-type ATPases have 2 components, CF(1) - the catalytic core - and CF(0) - the membrane proton channel. CF(1) has five subunits: alpha(3), beta(3), gamma(1), delta(1), epsilon(1). CF(0) has three main subunits: a(1), b(2) and c(9-12). The alpha and beta chains form an alternating ring which encloses part of the gamma chain. CF(1) is attached to CF(0) by a central stalk formed by the gamma and epsilon chains, while a peripheral stalk is formed by the delta and b chains.

Its subcellular location is the cell membrane. The catalysed reaction is ATP + H2O + 4 H(+)(in) = ADP + phosphate + 5 H(+)(out). Produces ATP from ADP in the presence of a proton gradient across the membrane. The alpha chain is a regulatory subunit. This is ATP synthase subunit alpha from Mycoplasmopsis agalactiae (strain NCTC 10123 / CIP 59.7 / PG2) (Mycoplasma agalactiae).